Here is a 331-residue protein sequence, read N- to C-terminus: Anthranilate phosphoribosyltransferase (331 aa).

5-phospho-alpha-D-ribose 1-diphosphate-binding positions include G78, 81–82, T86, 88–91, 106–114, and S118; these read GD, NVST, and KHGNYSVSS. Position 78 (G78) interacts with anthranilate. Position 90 (S90) interacts with Mg(2+). N109 lines the anthranilate pocket. An anthranilate-binding site is contributed by R164. The Mg(2+) site is built by D222 and E223.

The protein belongs to the anthranilate phosphoribosyltransferase family. As to quaternary structure, homodimer. Requires Mg(2+) as cofactor.

It carries out the reaction N-(5-phospho-beta-D-ribosyl)anthranilate + diphosphate = 5-phospho-alpha-D-ribose 1-diphosphate + anthranilate. It participates in amino-acid biosynthesis; L-tryptophan biosynthesis; L-tryptophan from chorismate: step 2/5. Catalyzes the transfer of the phosphoribosyl group of 5-phosphorylribose-1-pyrophosphate (PRPP) to anthranilate to yield N-(5'-phosphoribosyl)-anthranilate (PRA). The sequence is that of Anthranilate phosphoribosyltransferase from Haloarcula marismortui (strain ATCC 43049 / DSM 3752 / JCM 8966 / VKM B-1809) (Halobacterium marismortui).